The primary structure comprises 76 residues: Kappa-actitoxin-Avd4a (76 aa).

An N-terminal signal peptide occupies residues 1–19 (MNKALFLCLVVLCAAVVFA). The propeptide occupies 20-31 (AEDLQKAKHAPF). Cystine bridges form between C37–C72, C39–C65, and C55–C73.

The protein belongs to the sea anemone type 3 (BDS) potassium channel toxin family. In terms of tissue distribution, highly expressed in the ectodermal tissue from the distal and proximal tentacles, body wall, and oral disk.

The protein localises to the secreted. It localises to the nematocyst. Acts as a gating modifier on both Kv and Nav ion channels, and also acts on blood pressure. Voltage-dependently inhibits voltage-gated potassium channels Kv3 (Kv3.1/KCNC1, Kv3.2/KCNC2 and Kv3.4/KCNC4) and slows inactivation of the voltage-gated sodium channel Nav1.7/SCN9A. Inhibits all Kv3.1, Kv3.2 and Kv3.4 by about 50% when tested at a voltage of +40 mV (45%, 48% and 56%, respectively). May act by binding residues in voltage-sensing domains S3b and S4 of Kv3. On sodium channels, tests have been done on human Nav1.7/SCN9A (expressed in HEK293 cells) (EC(50)=3 nM) and rat SCG neurons that mostly carry Nav1.7 channels (EC(50)=300 nM). This toxin also reduces blood pressure. This Anemonia viridis (Snakelocks anemone) protein is Kappa-actitoxin-Avd4a.